A 102-amino-acid chain; its full sequence is Small ribosomal subunit protein uS10 (102 aa).

Belongs to the universal ribosomal protein uS10 family. In terms of assembly, part of the 30S ribosomal subunit.

Involved in the binding of tRNA to the ribosomes. The sequence is that of Small ribosomal subunit protein uS10 from Leptospira borgpetersenii serovar Hardjo-bovis (strain JB197).